The following is a 258-amino-acid chain: Shikimate dehydrogenase (NADP(+)) (258 aa).

Shikimate-binding positions include S14–S16 and T61. K65 (proton acceptor) is an active-site residue. Residues N86 and D101 each contribute to the shikimate site. NADP(+) is bound by residues G125–S129 and L211. Y213 is a binding site for shikimate. Residue G234 coordinates NADP(+).

Belongs to the shikimate dehydrogenase family. In terms of assembly, homodimer.

It catalyses the reaction shikimate + NADP(+) = 3-dehydroshikimate + NADPH + H(+). It functions in the pathway metabolic intermediate biosynthesis; chorismate biosynthesis; chorismate from D-erythrose 4-phosphate and phosphoenolpyruvate: step 4/7. Involved in the biosynthesis of the chorismate, which leads to the biosynthesis of aromatic amino acids. Catalyzes the reversible NADPH linked reduction of 3-dehydroshikimate (DHSA) to yield shikimate (SA). This Clostridium botulinum (strain Loch Maree / Type A3) protein is Shikimate dehydrogenase (NADP(+)).